Reading from the N-terminus, the 461-residue chain is MAPDRLGPEGTARPNSSGISVIVVGLGIAGLTAAIECHRKGHSVIAFERMKDVEPFGEFGFESPYWLLRQPSKGDSIIIGSNGGRIFGKWGRGEVRNAMQAWRYTPTHADIYDTAGRFMAQSEIPKAADDMYFTLRGRLAKTFYEHAQSLGIDMRMGSKVTEFWEDSNRAGIVVEGERFEADCVICADGIHSKSRSLFTSLNAQPFRSGFSIFRGKADANAIIADPDAKWILDQTENTDQFKVFLGKEICVVIITCGLGRAVVCSAMHRDLNEAEQSWSTHANPDDLLDAIKDWPCRRQIEPIVRKISEDQFIDYPLLTVSPLDTWVSQHGRMILIGDAAHPFFPTSGQGGAQAMEDAAVLAICLELAGKGNIPLALHATEKIRKSRASVLQLNRTYSEGVQLAPALPKSKDSMSVPNVPVMDWIWHHCCQSYAYDEFDKVAEAIQSGSEYIPHNLPEDGT.

Residues Glu-48 and Arg-136 each contribute to the FAD site. Residue Arg-214 is part of the active site. 2 residues coordinate FAD: Asp-338 and Gly-351.

It belongs to the paxM FAD-dependent monooxygenase family. Requires FAD as cofactor.

It participates in secondary metabolite biosynthesis. In terms of biological role, FAD-dependent monooxygenase; part of the gene cluster that mediates the biosynthesis of the indole diterpenes nodulisporic acids (NA). Nodulisporic acid A (NAA) and its chemically modified derivatives are of particular significance because of their highly potent insecticidal activity against blood-feeding arthropods and lack of observable adverse effects on mammals, in particular the tremogenicity associated with the paspaline-derived IDTs is not observed. The geranylgeranyl diphosphate (GGPP) synthase ggs1, localized outside of the cluster, is proposed to catalyze the first step in nodulisporic acid biosynthesis via conversion of farnesyl pyrophosphate and isopentyl pyrophosphate into geranylgeranyl pyrophosphate (GGPP). Condensation of indole-3-glycerol phosphate with GGPP by the prenyl transferase nodC then forms 3-geranylgeranylindole (3-GGI). Epoxidation by the FAD-dependent monooxygenase nodM leads to a single-epoxidized-GGI that is substrate of the terpene cyclase nodB for cyclization to yield emindole SB. The terminal methyl carbon, C28, of emindole SB is then oxidized by the cytochrome P450 monooxygenase nodW to produce nodulisporic acid F (NAF), the pentacyclic core of NAA. NAF is converted to nodulisporic acid E (NAE) via prenylation. This step is probably performed by one of the indole diterpene prenyltransferases nodD1 or nodD2. Several oxidation steps performed by the FAD-linked oxidoreductase nodO and one of the cytochrome P450 monooxygenase nodR, nodX or nodZ further convert NAE to nodulisporic acid D (NAD). NAD is substrate of cytochrome P450 monooxygenase nodJ to produce the precursor of nodulisporic acid C (NAC), converted to NAC by one of the indole diterpene prenyltransferases nodD1 or nodD2. The FAD-dependent monooxygenase nodY2 then oxidizes NAC to nodulisporic acid B (NAB). Finally NAB is converted to NAA by one of the cytochrome P450 monooxygenases nodR, nodX or nodZ. The polypeptide is FAD-dependent monooxygenase nodY2 (Hypoxylon pulicicidum).